The chain runs to 299 residues: tRNA dimethylallyltransferase 2 (299 aa).

9 to 16 (GPTGVGKT) is a binding site for ATP. 11–16 (TGVGKT) contributes to the substrate binding site. The tract at residues 34–37 (DSRQ) is interaction with substrate tRNA.

This sequence belongs to the IPP transferase family. Monomer. Mg(2+) serves as cofactor.

It carries out the reaction adenosine(37) in tRNA + dimethylallyl diphosphate = N(6)-dimethylallyladenosine(37) in tRNA + diphosphate. Its function is as follows. Catalyzes the transfer of a dimethylallyl group onto the adenine at position 37 in tRNAs that read codons beginning with uridine, leading to the formation of N6-(dimethylallyl)adenosine (i(6)A). This chain is tRNA dimethylallyltransferase 2, found in Parabacteroides distasonis (strain ATCC 8503 / DSM 20701 / CIP 104284 / JCM 5825 / NCTC 11152).